A 277-amino-acid chain; its full sequence is 2-dehydro-3-deoxyphosphooctonate aldolase (277 aa).

It belongs to the KdsA family.

It is found in the cytoplasm. The catalysed reaction is D-arabinose 5-phosphate + phosphoenolpyruvate + H2O = 3-deoxy-alpha-D-manno-2-octulosonate-8-phosphate + phosphate. It participates in carbohydrate biosynthesis; 3-deoxy-D-manno-octulosonate biosynthesis; 3-deoxy-D-manno-octulosonate from D-ribulose 5-phosphate: step 2/3. The protein operates within bacterial outer membrane biogenesis; lipopolysaccharide biosynthesis. The chain is 2-dehydro-3-deoxyphosphooctonate aldolase from Alkalilimnicola ehrlichii (strain ATCC BAA-1101 / DSM 17681 / MLHE-1).